We begin with the raw amino-acid sequence, 597 residues long: uncharacterized protein (597 aa).

Transmembrane regions (helical) follow at residues 37–57 (VLII…LWPV), 67–87 (IFWL…LQFA), 109–129 (GGER…YAAI), 134–154 (SVSL…FIAW), and 162–182 (ALMT…LAIV). The region spanning 393–597 (HQLARDLHDG…QITIFVPIES (205 aa)) is the Histidine kinase domain.

The protein localises to the cell membrane. This is an uncharacterized protein from Chloroflexus aurantiacus (strain ATCC 29366 / DSM 635 / J-10-fl).